A 238-amino-acid chain; its full sequence is Protein CPn_0658/CP_0089/CPj0658/CpB0684 (238 aa).

It belongs to the chlamydial CPn_0658/CT_538/TC_0825 family.

The protein is Protein CPn_0658/CP_0089/CPj0658/CpB0684 of Chlamydia pneumoniae (Chlamydophila pneumoniae).